Reading from the N-terminus, the 272-residue chain is Plastid division protein PDV1 (272 aa).

The Cytoplasmic segment spans residues 1-206; the sequence is MGEMEIEEIE…KRALGFNHVK (206 aa). The segment at 40–61 is disordered; it reads KPSNRSEKRKNPHGNSGEDKRP. A coiled-coil region spans residues 78 to 102; the sequence is IQEAKSLNAIRTALENLEDQLEFFH. The chain crosses the membrane as a helical span at residues 207-225; that stretch reads GVLGNAAIFAISVVAMLHL. Over 226-272 the chain is Chloroplast intermembrane; sequence HQVATSEHHLQKKEDRFYRSQQRKTYGRDKSSADRSLDHLDVMMARG.

As to quaternary structure, interacts (via C-terminus) with CDP1/PARC6 (via C-terminus). Interacts with ARC5/DRP5B. As to expression, expressed in young developing leaves, root tips, shoot apices, and flower buds (sepals, petals, stamens, and pistils), but not in developed tissues.

It is found in the plastid. The protein localises to the chloroplast outer membrane. Component of the plastid division machinery. Required to mediate the dissociation of ARC5/DRP5B from plastid outer envelope membranes (OEMs) at the midplastid constriction site in the cytoplasm, thus triggering ARC5/DRP5B ring turnover at the chloroplast division site. Binding to phosphatidylinositol 4-phosphate (PI4P) modulates negatively chloroplast division. The chain is Plastid division protein PDV1 from Arabidopsis thaliana (Mouse-ear cress).